The chain runs to 350 residues: Ion-translocating oxidoreductase complex subunit D (350 aa).

Transmembrane regions (helical) follow at residues 15–35, 36–56, 67–87, 88–108, and 122–142; these read QTQT…LAQT, WFFG…ALGA, PIKP…IGLS, LPPL…IIIA, and PAMV…TSWL. T186 is modified (FMN phosphoryl threonine). 4 helical membrane passes run 213-233, 242-262, 264-284, and 299-316; these read WGGI…LFLL, IPGA…LMTP, ATAT…AFFI, and LVYG…RRFG.

Belongs to the NqrB/RnfD family. In terms of assembly, the complex is composed of six subunits: RnfA, RnfB, RnfC, RnfD, RnfE and RnfG. Requires FMN as cofactor.

Its subcellular location is the cell inner membrane. Its function is as follows. Part of a membrane-bound complex that couples electron transfer with translocation of ions across the membrane. The polypeptide is Ion-translocating oxidoreductase complex subunit D (Aeromonas salmonicida (strain A449)).